The sequence spans 302 residues: Probable protein ABIL4 (302 aa).

Disordered stretches follow at residues 151–179 (PSTGHKRTQAARLQTDNGQDSKPKPYPSA) and 220–256 (LLGKDIPASPMHKPLQPNGNTSFDAKKNVGSKDQPGF). A compositionally biased stretch (polar residues) spans 161–170 (ARLQTDNGQD).

It belongs to the ABI family. Binds SCAR.

It is found in the cytoplasm. The protein resides in the cytoskeleton. Involved in regulation of actin and microtubule organization. Part of a WAVE complex that activates the Arp2/3 complex. This chain is Probable protein ABIL4, found in Oryza sativa subsp. japonica (Rice).